A 409-amino-acid polypeptide reads, in one-letter code: uncharacterized protein (409 aa).

4 consecutive transmembrane segments (helical) span residues 20-40 (ILTM…VSML), 283-303 (FALL…IGVM), 344-364 (IGGI…TVIF), and 372-392 (IPAV…FGLL).

The protein belongs to the ABC-4 integral membrane protein family.

It localises to the cell membrane. This is an uncharacterized protein from Bacillus subtilis (strain 168).